The sequence spans 471 residues: Cysteine--tRNA ligase (471 aa).

Residue Cys-29 coordinates Zn(2+). Residues 31–41 carry the 'HIGH' region motif; sequence PTVYNYIHIGN. Residues Cys-209, His-234, and Glu-238 each coordinate Zn(2+). The short motif at 266–270 is the 'KMSKS' region element; that stretch reads KMSKS. Lys-269 is a binding site for ATP.

This sequence belongs to the class-I aminoacyl-tRNA synthetase family. As to quaternary structure, monomer. Zn(2+) serves as cofactor.

The protein resides in the cytoplasm. It catalyses the reaction tRNA(Cys) + L-cysteine + ATP = L-cysteinyl-tRNA(Cys) + AMP + diphosphate. The sequence is that of Cysteine--tRNA ligase from Listeria innocua serovar 6a (strain ATCC BAA-680 / CLIP 11262).